The following is a 490-amino-acid chain: Protein lag-3 (490 aa).

Disordered stretches follow at residues 18–55, 105–155, 213–235, 307–362, and 391–490; these read PSVAGMKPSTSKTTHSPPPEEPTAPFVNDNLPNPEDEP, EDEE…PTSE, SSADSIRSVPTPASSMHQPSPAE, SSSE…MQRI, and QQQQ…ANIN. The span at 105–119 shows a compositional bias: basic and acidic residues; it reads EDEERKRVEQQKNKE. A compositionally biased stretch (polar residues) spans 122-138; the sequence is NASTSAPTSSRNGGQSV. The span at 307–318 shows a compositional bias: polar residues; the sequence is SSSESPTKQSPM. Low complexity-rich tracts occupy residues 341-359, 391-404, and 413-456; these read QLQQQQNKMRLMQQQQQEM, QQQQQQQMQQHHQM, and QAHQ…HHQM.

As to quaternary structure, component of a complex consisting of at least a lin-12/Notch intracellular domain (NICD), lag-1, and lag-3. Interacts with a NICD of lin-12/Notch or glp-1/Notch; the interactions are direct. As to expression, expressed in the progenitor zone and the early pachytene region of the hermaphrodite gonad.

It is found in the nucleus. Functionally, glp-1/Notch and lin-12/Notch proteins promote signaling by recruiting lag-3 to target promoters, where it functions as a transcriptional activator, probably as part of a complex with a Notch intracellular domain (NICD) and the transcription regulator lag-1. Involved in the p53-mediated germ-cell apoptotic response to DNA damage, perhaps acting as a transcriptional activator. May regulate phosphatase lip-1 mRNA transcription downstream of glp-1. The chain is Protein lag-3 (sel-8) from Caenorhabditis elegans.